The primary structure comprises 163 residues: K88 minor fimbrial subunit FaeF (163 aa).

Residues 1–22 (MKKTMMAAALVLSALSIQSALA) form the signal peptide.

The protein localises to the fimbrium. Functionally, K88 minor fimbrial subunit, plays an essential role in the biogenesis of the K88 fimbriae. required at some step in the initiation and/or elongation of the K88 fimbriae. This chain is K88 minor fimbrial subunit FaeF (faeF), found in Escherichia coli.